Consider the following 594-residue polypeptide: MAANMYRVGDYVYFENSSSNPYLIRRIEELNKTASGNVEAKVVCFYRRRDISNTLIMLADKHAKEIEEESETTVEADLTDKQKHQLKHRELFLSRQYESLPATHIRGKCSVALLNETESVLSYLDKEDTFFYSLVYDPSLKTLLADKGEIRVGPRYQADIPEMLLEGESDEREQSKLEVKVWDPNSPLTDRQIDQFLVVARAVGTFARALDCSSSVRQPSLHMSAAAASRDITLFHAMDTLYRHSYDLSSAISVLVPLGGPVLCRDEMEEWSASEASLFEEALEKYGKDFNDIRQDFLPWKSLTSIIEYYYMWKTTDRYVQQKRLKAAEAESKLKQVYIPTYSKPNPNQISTSNGKPGAVNGAVGTTFQPQNPLLGRACESCYATQSHQWYSWGPPNMQCRLCAICWLYWKKYGGLKMPTQSEEEKLSPSPTTEDPRVRSHVSRQAMQGMPVRNTGSPKSAVKTRQAFFLHTTYFTKFARQVCKNTLRLRQAARRPFVAINYAAIRAEYADRHAELSGSPLKSKSTRKPLACIIGYLEIHPAKKPNVIRSTPSLQTPTTKRMLTTPNHTSLSILGKRNYSHHNGLDELTCCVSD.

In terms of domain architecture, BAH spans 1 to 147 (MAANMYRVGD…PSLKTLLADK (147 aa)). Positions 148 to 259 (GEIRVGPRYQ…SAISVLVPLG (112 aa)) constitute an ELM2 domain. Positions 266-318 (DEMEEWSASEASLFEEALEKYGKDFNDIRQDFLPWKSLTSIIEYYYMWKTTDR) constitute an SANT domain. The GATA-type; atypical zinc-finger motif lies at 379–406 (CESCYATQSHQWYSWGPPNMQCRLCAIC). S428 and S430 each carry phosphoserine. A Phosphothreonine modification is found at T455. S519 bears the Phosphoserine mark.

Belongs to the metastasis-associated protein family. In terms of assembly, component of the nucleosome remodeling and deacetylase (NuRD) repressor complex, composed of core proteins MTA1, MTA2, MTA3, RBBP4, RBBP7, HDAC1, HDAC2, MBD2, MBD3, and peripherally associated proteins CDK2AP1, CDK2AP2, GATAD2A, GATAD2B, CHD3, CHD4 and CHD5. The exact stoichiometry of the NuRD complex is unknown, and some subunits such as MBD2 and MBD3, GATAD2A and GATAD2B, and CHD3, CHD4 and CHD5 define mutually exclusive NuRD complexes. Interacts with BCL6. Interacts with NACC2. Interacts with PWWP2B. Expressed in germinal centers of lymphoid tissues. No expression in nonepithelial cells.

It is found in the nucleus. Its subcellular location is the cytoplasm. In terms of biological role, acts as a component of the histone deacetylase NuRD complex which participates in the remodeling of chromatin. Plays a role in maintenance of the normal epithelial architecture through the repression of SNAI1 transcription in a histone deacetylase-dependent manner, and thus the regulation of E-cadherin levels. Contributes to transcriptional repression by BCL6. The sequence is that of Metastasis-associated protein MTA3 (MTA3) from Homo sapiens (Human).